A 268-amino-acid chain; its full sequence is Putative cysteine-rich repeat secretory protein 5 (268 aa).

The first 24 residues, 1–24, serve as a signal peptide directing secretion; sequence MTGINTHFAVALFCFFSFSLRAMS. Gnk2-homologous domains follow at residues 27-129 and 135-248; these read SQML…NVSF and DVPS…ISAL.

The protein belongs to the cysteine-rich repeat secretory protein family.

It is found in the secreted. The chain is Putative cysteine-rich repeat secretory protein 5 (CRRSP5) from Arabidopsis thaliana (Mouse-ear cress).